The chain runs to 32 residues: Photosystem I reaction center subunit XII (32 aa).

A helical transmembrane segment spans residues 9 to 31 (VYVALVSALITSFLAVRLGLALY).

This sequence belongs to the PsaM family.

It localises to the plastid. The protein resides in the chloroplast thylakoid membrane. This chain is Photosystem I reaction center subunit XII, found in Chaetosphaeridium globosum (Charophycean green alga).